The sequence spans 291 residues: Pantothenate synthetase (291 aa).

33-40 is a binding site for ATP; sequence MGALHEGH. Catalysis depends on histidine 40, which acts as the Proton donor. (R)-pantoate is bound at residue glutamine 64. Glutamine 64 serves as a coordination point for beta-alanine. Position 157–160 (157–160) interacts with ATP; it reads GEKD. Glutamine 163 lines the (R)-pantoate pocket. ATP is bound by residues valine 186 and 194–197; that span reads LSSR.

The protein belongs to the pantothenate synthetase family. In terms of assembly, homodimer.

The protein resides in the cytoplasm. The enzyme catalyses (R)-pantoate + beta-alanine + ATP = (R)-pantothenate + AMP + diphosphate + H(+). It participates in cofactor biosynthesis; (R)-pantothenate biosynthesis; (R)-pantothenate from (R)-pantoate and beta-alanine: step 1/1. Catalyzes the condensation of pantoate with beta-alanine in an ATP-dependent reaction via a pantoyl-adenylate intermediate. The sequence is that of Pantothenate synthetase from Rubrobacter xylanophilus (strain DSM 9941 / JCM 11954 / NBRC 16129 / PRD-1).